The primary structure comprises 330 residues: tRNA U34 carboxymethyltransferase (330 aa).

Residues K91, W105, K110, G130, 152 to 154 (DPS), 181 to 182 (IE), M196, Y200, and R315 contribute to the carboxy-S-adenosyl-L-methionine site.

It belongs to the class I-like SAM-binding methyltransferase superfamily. CmoB family. Homotetramer.

The enzyme catalyses carboxy-S-adenosyl-L-methionine + 5-hydroxyuridine(34) in tRNA = 5-carboxymethoxyuridine(34) in tRNA + S-adenosyl-L-homocysteine + H(+). Functionally, catalyzes carboxymethyl transfer from carboxy-S-adenosyl-L-methionine (Cx-SAM) to 5-hydroxyuridine (ho5U) to form 5-carboxymethoxyuridine (cmo5U) at position 34 in tRNAs. The polypeptide is tRNA U34 carboxymethyltransferase (Shewanella woodyi (strain ATCC 51908 / MS32)).